The chain runs to 604 residues: Cytosolic Fe-S cluster assembly factor nar1 (604 aa).

Residues Cys20, Cys62, Cys65, Cys68, Cys215, and Cys270 each coordinate [4Fe-4S] cluster. A disordered region spans residues Leu434–Ser461. Residues Met451–Ser461 show a composition bias toward polar residues. Cys473 and Cys477 together coordinate [4Fe-4S] cluster.

It belongs to the NARF family.

Its function is as follows. Component of the cytosolic Fe/S protein assembly machinery. Required for maturation of extramitochondrial Fe/S proteins. May play a role in the transfer of pre-assembled Fe/S clusters to target apoproteins. The protein is Cytosolic Fe-S cluster assembly factor nar1 (nar1) of Penicillium rubens (strain ATCC 28089 / DSM 1075 / NRRL 1951 / Wisconsin 54-1255) (Penicillium chrysogenum).